The sequence spans 485 residues: UDP-N-acetylmuramoyl-L-alanyl-D-glutamate--2,6-diaminopimelate ligase (485 aa).

UDP-N-acetyl-alpha-D-muramoyl-L-alanyl-D-glutamate is bound at residue Ser32. 111–117 is a binding site for ATP; it reads GTNGKTT. UDP-N-acetyl-alpha-D-muramoyl-L-alanyl-D-glutamate-binding positions include 153–154, Ser180, and Arg188; that span reads TT. Residue Lys220 is modified to N6-carboxylysine. Meso-2,6-diaminopimelate is bound by residues Arg382, 405-408, Gly455, and Glu459; that span reads DNPR. The short motif at 405-408 is the Meso-diaminopimelate recognition motif element; that stretch reads DNPR.

The protein belongs to the MurCDEF family. MurE subfamily. Mg(2+) is required as a cofactor. Post-translationally, carboxylation is probably crucial for Mg(2+) binding and, consequently, for the gamma-phosphate positioning of ATP.

Its subcellular location is the cytoplasm. The catalysed reaction is UDP-N-acetyl-alpha-D-muramoyl-L-alanyl-D-glutamate + meso-2,6-diaminopimelate + ATP = UDP-N-acetyl-alpha-D-muramoyl-L-alanyl-gamma-D-glutamyl-meso-2,6-diaminopimelate + ADP + phosphate + H(+). Its pathway is cell wall biogenesis; peptidoglycan biosynthesis. In terms of biological role, catalyzes the addition of meso-diaminopimelic acid to the nucleotide precursor UDP-N-acetylmuramoyl-L-alanyl-D-glutamate (UMAG) in the biosynthesis of bacterial cell-wall peptidoglycan. The polypeptide is UDP-N-acetylmuramoyl-L-alanyl-D-glutamate--2,6-diaminopimelate ligase (Chlamydia felis (strain Fe/C-56) (Chlamydophila felis)).